A 286-amino-acid polypeptide reads, in one-letter code: Shikimate dehydrogenase (NADP(+)) (286 aa).

Shikimate is bound by residues 21 to 23 (TLS) and T68. K72 serves as the catalytic Proton acceptor. E84 is an NADP(+) binding site. Shikimate contacts are provided by N93 and D108. NADP(+)-binding positions include 132–136 (GNGGA) and L230. Y232 lines the shikimate pocket. An NADP(+)-binding site is contributed by G253.

It belongs to the shikimate dehydrogenase family. As to quaternary structure, homodimer.

The enzyme catalyses shikimate + NADP(+) = 3-dehydroshikimate + NADPH + H(+). It functions in the pathway metabolic intermediate biosynthesis; chorismate biosynthesis; chorismate from D-erythrose 4-phosphate and phosphoenolpyruvate: step 4/7. Functionally, involved in the biosynthesis of the chorismate, which leads to the biosynthesis of aromatic amino acids. Catalyzes the reversible NADPH linked reduction of 3-dehydroshikimate (DHSA) to yield shikimate (SA). The protein is Shikimate dehydrogenase (NADP(+)) of Microcystis aeruginosa (strain NIES-843 / IAM M-2473).